The sequence spans 293 residues: ATP synthase gamma chain (293 aa).

It belongs to the ATPase gamma chain family. As to quaternary structure, F-type ATPases have 2 components, CF(1) - the catalytic core - and CF(0) - the membrane proton channel. CF(1) has five subunits: alpha(3), beta(3), gamma(1), delta(1), epsilon(1). CF(0) has three main subunits: a, b and c.

It localises to the cell membrane. Its function is as follows. Produces ATP from ADP in the presence of a proton gradient across the membrane. The gamma chain is believed to be important in regulating ATPase activity and the flow of protons through the CF(0) complex. This chain is ATP synthase gamma chain, found in Streptococcus gordonii (strain Challis / ATCC 35105 / BCRC 15272 / CH1 / DL1 / V288).